Reading from the N-terminus, the 305-residue chain is Probable aspartoacylase (305 aa).

Residues His13 and Glu16 each contribute to the Zn(2+) site. Residues Arg55 and 62-63 (NR) each bind substrate. Residue His105 participates in Zn(2+) binding. Glu163 and Tyr273 together coordinate substrate.

This sequence belongs to the AspA/AstE family. Aspartoacylase subfamily. The cofactor is Zn(2+).

It carries out the reaction an N-acyl-L-aspartate + H2O = a carboxylate + L-aspartate. The sequence is that of Probable aspartoacylase from Prochlorococcus marinus (strain NATL2A).